The following is a 252-amino-acid chain: Chaperone protein AggD (252 aa).

Residues 1–22 (MKIRRIVSTIAIALSVFTFAHA) form the signal peptide.

Belongs to the periplasmic pilus chaperone family.

Its subcellular location is the periplasm. Involved in the biogenesis of the AAF/I fimbriae. This is Chaperone protein AggD (aggD) from Escherichia coli.